Reading from the N-terminus, the 486-residue chain is N-succinylglutamate 5-semialdehyde dehydrogenase (486 aa).

220–225 serves as a coordination point for NAD(+); it reads GSSRTG. Active-site residues include glutamate 243 and cysteine 277.

The protein belongs to the aldehyde dehydrogenase family. AstD subfamily.

The enzyme catalyses N-succinyl-L-glutamate 5-semialdehyde + NAD(+) + H2O = N-succinyl-L-glutamate + NADH + 2 H(+). It functions in the pathway amino-acid degradation; L-arginine degradation via AST pathway; L-glutamate and succinate from L-arginine: step 4/5. Catalyzes the NAD-dependent reduction of succinylglutamate semialdehyde into succinylglutamate. The polypeptide is N-succinylglutamate 5-semialdehyde dehydrogenase (Shewanella baltica (strain OS155 / ATCC BAA-1091)).